We begin with the raw amino-acid sequence, 332 residues long: Heat-inducible transcription repressor HrcA (332 aa).

The protein belongs to the HrcA family.

In terms of biological role, negative regulator of class I heat shock genes (grpE-dnaK-dnaJ and groELS operons). Prevents heat-shock induction of these operons. The sequence is that of Heat-inducible transcription repressor HrcA from Mycoplasma mobile (strain ATCC 43663 / 163K / NCTC 11711) (Mesomycoplasma mobile).